We begin with the raw amino-acid sequence, 155 residues long: uncharacterized protein (155 aa).

The region spanning 6–155 (TCVRNARLAD…CDEIAMVKTL (150 aa)) is the N-acetyltransferase domain.

This sequence belongs to the acetyltransferase family.

This is an uncharacterized protein from Chlorobaculum tepidum (strain ATCC 49652 / DSM 12025 / NBRC 103806 / TLS) (Chlorobium tepidum).